A 124-amino-acid polypeptide reads, in one-letter code: uncharacterized protein (124 aa).

The next 3 membrane-spanning stretches (helical) occupy residues Leu-13–Leu-33, Gly-43–Phe-63, and Gly-71–Ile-91.

This sequence to M.thermoautotrophicum MTH137.

The protein localises to the cell membrane. This is an uncharacterized protein from Methanocaldococcus jannaschii (strain ATCC 43067 / DSM 2661 / JAL-1 / JCM 10045 / NBRC 100440) (Methanococcus jannaschii).